A 528-amino-acid polypeptide reads, in one-letter code: Protein MGF 505-7R (528 aa).

It belongs to the asfivirus MGF 505 family. In terms of assembly, interacts with host STING1. Interacts with host JAK1; this interaction leads to JAK1 degradation. Interacts with host JAK2; this interaction leads to JAK2 degradation. Interacts with host RELA; this interaction inhibits NF-kappa-B promoter activity.

The protein resides in the host cytoplasm. Functionally, plays a role in virus cell tropism, and may be required for efficient virus replication in macrophages. Interferes with host NF-kappa-B promoter activity mediated by TLR8. Mechanistically, inhibits the phosphorylation and subsequent nuclear translocation of host NF-kappa-B RELA subunit downstream of TLR8. Promotes the expression of the autophagy-related protein host ULK1 to degrade host STING and inhibit the interferon response. Also inhibits JAK1- and JAK2-mediated signaling and thus negatively regulates the IFN-gamma signaling. This African swine fever virus (isolate Pig/Kenya/KEN-50/1950) (ASFV) protein is Protein MGF 505-7R.